The chain runs to 141 residues: Large ribosomal subunit protein uL11 (141 aa).

The protein belongs to the universal ribosomal protein uL11 family. As to quaternary structure, part of the ribosomal stalk of the 50S ribosomal subunit. Interacts with L10 and the large rRNA to form the base of the stalk. L10 forms an elongated spine to which L12 dimers bind in a sequential fashion forming a multimeric L10(L12)X complex. In terms of processing, one or more lysine residues are methylated.

Functionally, forms part of the ribosomal stalk which helps the ribosome interact with GTP-bound translation factors. The protein is Large ribosomal subunit protein uL11 of Selenomonas ruminantium.